Reading from the N-terminus, the 196-residue chain is Agamous-like MADS-box protein AGL70 (196 aa).

Residues 1 to 61 form the MADS-box domain; that stretch reads MGRRKVEIKR…GKLYDSASGD (61 aa). The Nuclear localization signal motif lies at 8–15; sequence IKRIENKS. The K-box domain occupies 80–170; sequence ALDLAEKIRN…ASQVGKKTFL (91 aa).

Mostly expressed in roots, leaves and flowers, and, to a lower extent, in inflorescence, siliques, pollen and shoots.

The protein localises to the nucleus. In terms of biological role, probable transcription factor involved in the negative regulation of flowering time, probably through the photoperiodic and vernalization pathways; more efficient in cv. Landsberg erecta than in cv. Columbia background. Prevents premature flowering. Involved in the modulation of vernalization impact on flowering according to genotype acclimation to altitude. This is Agamous-like MADS-box protein AGL70 from Arabidopsis thaliana (Mouse-ear cress).